The following is a 271-amino-acid chain: Aquaporin-1 (271 aa).

Residues 1–11 (MASEFKKKLFW) lie on the Cytoplasmic side of the membrane. The helical transmembrane segment at 12 to 29 (RAVVAEFLAMILFIFISI) threads the bilayer. Residues 30–48 (GSALGFHYPIKSNQTTGAV) are Extracellular-facing. Asn42 carries an N-linked (GlcNAc...) asparagine glycan. A helical transmembrane segment spans residues 49-67 (QDNVKVSLAFGLSIATLAQ). The Cytoplasmic portion of the chain corresponds to 68 to 70 (SVG). An intramembrane segment occupies 71 to 84 (HISGAHLNPAVTLG). The NPA 1 signature appears at 78–80 (NPA). Residues 85–92 (LLLSCQIS) are Cytoplasmic-facing. A helical transmembrane segment spans residues 93 to 111 (VLRAIMYIIAQCVGAIVAT). The Extracellular segment spans residues 112 to 135 (AILSGITSSLPDNSLGLNALAPGV). Residues 136 to 155 (NSGQGLGIEIIGTLQLVLCV) form a helical membrane-spanning segment. Topologically, residues 156 to 165 (LATTDRRRRD) are cytoplasmic. The helical transmembrane segment at 166-183 (LGGSGPLAIGFSVALGHL) threads the bilayer. Residues 184-188 (LAIDY) are Extracellular-facing. The stretch at 189–201 (TGCGINPARSFGS) is an intramembrane region. Positions 194–196 (NPA) match the NPA 2 motif. Topologically, residues 202–208 (SVITHNF) are extracellular. Residues 209–226 (QDHWIFWVGPFIGAALAV) form a helical membrane-spanning segment. Topologically, residues 227–271 (LIYDFILAPRSSDLTDRVKVWTSGQVEEYDLDADDINSRVEMKPK) are cytoplasmic. Ser249 carries the phosphoserine modification. Position 255 is a phosphotyrosine (Tyr255). Ser264 carries the post-translational modification Phosphoserine.

The protein belongs to the MIP/aquaporin (TC 1.A.8) family. In terms of assembly, homotetramer; each monomer provides an independent water pore. Component of the ankyrin-1 complex in the erythrocyte, composed of ANK1, RHCE, RHAG, SLC4A1, EPB42, GYPA, GYPB and AQP1. Interacts with EPHB2; involved in endolymph production in the inner ear. Identified in a complex with STOM. Interacts (via the N-terminal) with ANK1 (via ANK 1-5 repeats). Interacts (via the C-terminal) with EPB42.

The protein localises to the cell membrane. It carries out the reaction H2O(in) = H2O(out). The enzyme catalyses nitric oxide(out) = nitric oxide(in). The catalysed reaction is CO2(out) = CO2(in). It catalyses the reaction glycerol(in) = glycerol(out). It carries out the reaction H2O2(out) = H2O2(in). The enzyme catalyses K(+)(in) = K(+)(out). The catalysed reaction is Na(+)(in) = Na(+)(out). Its function is as follows. Forms a water channel that facilitates the transport of water across cell membranes, playing a crucial role in water homeostasis in various tissues. Could also be permeable to small solutes including hydrogen peroxide, glycerol and gases such as amonnia (NH3), nitric oxide (NO) and carbon dioxide (CO2). Recruited to the ankyrin-1 complex, a multiprotein complex of the erythrocyte membrane, it could be part of a CO2 metabolon, linking facilitated diffusion of CO2 across the membrane, anion exchange of Cl(-)/HCO3(-) and interconversion of dissolved CO2 and carbonic acid in the cytosol. In vitro, it shows non-selective gated cation channel activity and may be permeable to cations like K(+) and Na(+) in vivo. The protein is Aquaporin-1 of Bos taurus (Bovine).